The sequence spans 386 residues: Protein U3 (386 aa).

This chain is Protein U3 (U3), found in Human herpesvirus 6B (strain Z29) (HHV-6 variant B).